Reading from the N-terminus, the 105-residue chain is Large ribosomal subunit protein eL36 (105 aa).

Residue lysine 62 is modified to N6-acetyllysine.

It belongs to the eukaryotic ribosomal protein eL36 family. In terms of assembly, component of the large ribosomal subunit.

It is found in the cytoplasm. The protein localises to the cytosol. In terms of biological role, component of the large ribosomal subunit. The ribosome is a large ribonucleoprotein complex responsible for the synthesis of proteins in the cell. In Homo sapiens (Human), this protein is Large ribosomal subunit protein eL36 (RPL36).